A 126-amino-acid chain; its full sequence is Small ribosomal subunit protein uS12 (126 aa).

Aspartate 89 is subject to 3-methylthioaspartic acid.

It belongs to the universal ribosomal protein uS12 family. As to quaternary structure, part of the 30S ribosomal subunit. Contacts proteins S8 and S17. May interact with IF1 in the 30S initiation complex.

Its function is as follows. With S4 and S5 plays an important role in translational accuracy. Functionally, interacts with and stabilizes bases of the 16S rRNA that are involved in tRNA selection in the A site and with the mRNA backbone. Located at the interface of the 30S and 50S subunits, it traverses the body of the 30S subunit contacting proteins on the other side and probably holding the rRNA structure together. The combined cluster of proteins S8, S12 and S17 appears to hold together the shoulder and platform of the 30S subunit. The chain is Small ribosomal subunit protein uS12 from Carboxydothermus hydrogenoformans (strain ATCC BAA-161 / DSM 6008 / Z-2901).